Here is a 269-residue protein sequence, read N- to C-terminus: MFKIYAVSDSIGETAEQVANATAYQFGSSVKVERVPYVKTFEDVNNLISIIENPNEAMIISTIVLVDIREFLVQRCVESGIHISNVLGPCISLVSTILNKTPEYKPGAVWDMDKKYYKKIEAMEFAIRYDDSKDHSGIKHADIVLIGLSRTSKTPLSIYLANKGIKALNIPLMPEVPVPEELFEIDRKKIIGLTIDPMHLIEIRRHRVDNMMKIPTELKYANAERVLDELEFADKIMRKLKCKVIDVTKRAIEDTALIIMESVFSDRII.

Residue 147 to 154 (GLSRTSKT) coordinates ADP.

Belongs to the pyruvate, phosphate/water dikinase regulatory protein family. PDRP subfamily.

It catalyses the reaction N(tele)-phospho-L-histidyl/L-threonyl-[pyruvate, phosphate dikinase] + ADP = N(tele)-phospho-L-histidyl/O-phospho-L-threonyl-[pyruvate, phosphate dikinase] + AMP + H(+). It carries out the reaction N(tele)-phospho-L-histidyl/O-phospho-L-threonyl-[pyruvate, phosphate dikinase] + phosphate + H(+) = N(tele)-phospho-L-histidyl/L-threonyl-[pyruvate, phosphate dikinase] + diphosphate. Bifunctional serine/threonine kinase and phosphorylase involved in the regulation of the pyruvate, phosphate dikinase (PPDK) by catalyzing its phosphorylation/dephosphorylation. The sequence is that of Putative pyruvate, phosphate dikinase regulatory protein from Clostridium botulinum (strain 657 / Type Ba4).